A 496-amino-acid chain; its full sequence is Glycerol kinase (496 aa).

Residue Thr12 participates in ADP binding. Positions 12, 13, and 14 each coordinate ATP. Sn-glycerol 3-phosphate is bound at residue Thr12. Arg16 is an ADP binding site. The sn-glycerol 3-phosphate site is built by Arg82, Glu83, and Tyr134. Glycerol contacts are provided by Arg82, Glu83, and Tyr134. The residue at position 230 (His230) is a Phosphohistidine; by HPr. Asp244 provides a ligand contact to sn-glycerol 3-phosphate. Glycerol contacts are provided by Asp244 and Gln245. The ADP site is built by Thr266 and Gly309. Positions 266, 309, 313, and 410 each coordinate ATP. Positions 410 and 414 each coordinate ADP.

The protein belongs to the FGGY kinase family. As to quaternary structure, homotetramer and homodimer (in equilibrium). The phosphoenolpyruvate-dependent sugar phosphotransferase system (PTS), including enzyme I, and histidine-containing protein (HPr) are required for the phosphorylation, which leads to the activation of the enzyme.

It catalyses the reaction glycerol + ATP = sn-glycerol 3-phosphate + ADP + H(+). It functions in the pathway polyol metabolism; glycerol degradation via glycerol kinase pathway; sn-glycerol 3-phosphate from glycerol: step 1/1. Activated by phosphorylation and inhibited by fructose 1,6-bisphosphate (FBP). Key enzyme in the regulation of glycerol uptake and metabolism. Catalyzes the phosphorylation of glycerol to yield sn-glycerol 3-phosphate. This chain is Glycerol kinase, found in Bacillus cereus (strain Q1).